Reading from the N-terminus, the 229-residue chain is Ferric nitrobindin-like protein (229 aa).

Residues 1-54 form a disordered region; it reads MSENSTPNNPVVPGAGADGPSLSDSASISGSDAVNLAAEQSKSTAHRNIPGLGD. Residues 18–33 show a composition bias toward low complexity; sequence DGPSLSDSASISGSDA. The short motif at 82-88 is the GXWXGXG element; that stretch reads GVWRGEG.

This sequence belongs to the nitrobindin family.

This is Ferric nitrobindin-like protein from Corynebacterium glutamicum (strain R).